Here is a 919-residue protein sequence, read N- to C-terminus: Rho guanine nucleotide exchange factor 1 (919 aa).

Positions 39-230 (DQNSQFQSLE…SLYMRHLGVR (192 aa)) constitute an RGSL domain. The disordered stretch occupies residues 247–402 (VMGNRRSDEP…PPGWRELVPS (156 aa)). The span at 281-310 (DCRHLKVEVDEKPGPADRKGSLGISSRDRT) shows a compositional bias: basic and acidic residues. Over residues 363 to 379 (STEDNGETESPEPGDDG) the composition is skewed to acidic residues. At Ser372 the chain carries Phosphoserine. The region spanning 414–603 (KRQEVISELL…REILHHVNQA (190 aa)) is the DH domain. The 114-residue stretch at 645–758 (KLVHEGPLTW…WCALITETAG (114 aa)) folds into the PH domain. The residue at position 693 (Thr693) is a Phosphothreonine. Tyr736 is subject to Phosphotyrosine; by JAK2. 2 disordered regions span residues 761-800 (KVPAPASRPKPRPSPSSTREPLLSSSENGTGGTEAAPADA) and 839-865 (TEEDSGAGPPRDGDGVPGGGAPGPTHT). The span at 775 to 787 (PSSTREPLLSSSE) shows a compositional bias: low complexity. Residues 864-893 (HTQEVEENLLSLEVVIKQLEELEEEFCRLR) are a coiled coil. Ser904 is subject to Phosphoserine.

In terms of assembly, interacts with RHOA, GNA12 and GNA13. Homooligomerizes through the coiled coil region. Interacts with CTNNAL1. May interact with CCPG1. In terms of processing, phosphorylated by PKCA. Angiotensin-2 induced Tyr-736 phosphorylation is mediated by JAK2.

The protein resides in the cytoplasm. It localises to the membrane. Its function is as follows. Seems to play a role in the regulation of RhoA GTPase by guanine nucleotide-binding alpha-12 (GNA12) and alpha-13 (GNA13) subunits. Acts as a GTPase-activating protein (GAP) for GNA12 and GNA13, and as guanine nucleotide exchange factor (GEF) for RhoA GTPase. Activated G alpha 13/GNA13 stimulates the RhoGEF activity through interaction with the RGS-like domain. This GEF activity is inhibited by binding to activated GNA12. Mediates angiotensin-2-induced RhoA activation. In lymphoid follicles, may trigger activation of GNA13 as part of S1PR2-dependent signaling pathway that leads to inhibition of germinal center (GC) B cell growth and migration outside the GC niche. This is Rho guanine nucleotide exchange factor 1 (Arhgef1) from Rattus norvegicus (Rat).